The chain runs to 245 residues: 1-(5-phosphoribosyl)-5-[(5-phosphoribosylamino)methylideneamino] imidazole-4-carboxamide isomerase (245 aa).

Aspartate 13 (proton acceptor) is an active-site residue. Residue aspartate 132 is the Proton donor of the active site.

Belongs to the HisA/HisF family.

Its subcellular location is the cytoplasm. The catalysed reaction is 1-(5-phospho-beta-D-ribosyl)-5-[(5-phospho-beta-D-ribosylamino)methylideneamino]imidazole-4-carboxamide = 5-[(5-phospho-1-deoxy-D-ribulos-1-ylimino)methylamino]-1-(5-phospho-beta-D-ribosyl)imidazole-4-carboxamide. Its pathway is amino-acid biosynthesis; L-histidine biosynthesis; L-histidine from 5-phospho-alpha-D-ribose 1-diphosphate: step 4/9. The chain is 1-(5-phosphoribosyl)-5-[(5-phosphoribosylamino)methylideneamino] imidazole-4-carboxamide isomerase from Frankia alni (strain DSM 45986 / CECT 9034 / ACN14a).